The chain runs to 119 residues: Beta-2-microglobulin (119 aa).

An N-terminal signal peptide occupies residues 1-20; sequence MARFVVVALLVLLSVSDLEA. In terms of domain architecture, Ig-like C1-type spans 25–114; that stretch reads PKIQVYSRYP…VTFLTPKTVK (90 aa). C45 and C100 are oxidised to a cystine.

Belongs to the beta-2-microglobulin family. Heterodimer of an alpha chain and a beta chain. Beta-2-microglobulin is the beta-chain of major histocompatibility complex class I molecules.

The protein resides in the secreted. Functionally, component of the class I major histocompatibility complex (MHC). Involved in the presentation of peptide antigens to the immune system. In Leontocebus fuscicollis (Brown-mantled tamarin), this protein is Beta-2-microglobulin (B2M).